Here is a 305-residue protein sequence, read N- to C-terminus: Sodium/potassium-transporting ATPase subunit beta-1 (305 aa).

Residues 1 to 32 (MAREKSTDDGGGWKKFLWDSEKKQVLGRTGTS) are Cytoplasmic-facing. A helical; Signal-anchor for type II membrane protein membrane pass occupies residues 33-53 (WFKIFVFYLIFYGCLAGIFIG). At 54 to 305 (TIQVMLLTIS…RFEVKIEVKS (252 aa)) the chain is on the extracellular side. N-linked (GlcNAc...) asparagine glycosylation occurs at Asn-114. Cys-127 and Cys-150 form a disulfide bridge. N-linked (GlcNAc...) asparagine glycosylation is present at Asn-159. Cys-160 and Cys-176 are oxidised to a cystine. 2 N-linked (GlcNAc...) asparagine glycosylation sites follow: Asn-194 and Asn-267. Cys-215 and Cys-278 are disulfide-bonded.

This sequence belongs to the X(+)/potassium ATPases subunit beta family. In terms of assembly, the sodium/potassium-transporting ATPase is composed of a catalytic alpha subunit, an auxiliary non-catalytic beta subunit and an additional regulatory subunit.

It localises to the cell membrane. Functionally, this is the non-catalytic component of the active enzyme, which catalyzes the hydrolysis of ATP coupled with the exchange of Na(+) and K(+) ions across the plasma membrane. The beta subunit regulates, through assembly of alpha/beta heterodimers, the number of sodium pumps transported to the plasma membrane. This is Sodium/potassium-transporting ATPase subunit beta-1 (atp1b1) from Tetronarce californica (Pacific electric ray).